Consider the following 188-residue polypeptide: Elongation factor P (188 aa).

This sequence belongs to the elongation factor P family.

It localises to the cytoplasm. Its pathway is protein biosynthesis; polypeptide chain elongation. In terms of biological role, involved in peptide bond synthesis. Stimulates efficient translation and peptide-bond synthesis on native or reconstituted 70S ribosomes in vitro. Probably functions indirectly by altering the affinity of the ribosome for aminoacyl-tRNA, thus increasing their reactivity as acceptors for peptidyl transferase. The sequence is that of Elongation factor P from Anaplasma marginale (strain St. Maries).